The following is a 124-amino-acid chain: MaFF-interacting protein (124 aa).

Positions 54–96 (LVSEVEELYKSITALREKLLQAEQSLRNLKDIHMSLEKDVTAM) form a coiled coil.

Belongs to the tektin family. As to quaternary structure, interacts with MIS18A. Interacts (via its coiled-coil region) with MAFF. Strongly expressed in brain, kidney and ovary. Moderately expressed in liver, spleen, thymus, prostate, testis, small intestine and colon. Weakly expressed in heart, placenta, lung and leukocytes.

Its subcellular location is the cytoplasm. It is found in the nucleus. It localises to the nucleolus. In terms of biological role, acts as a coactivator of MAFF transcriptional activity. Inhibits cell growth and colony-forming efficiency. This is MaFF-interacting protein (MAFIP) from Homo sapiens (Human).